The chain runs to 310 residues: MNDFVFSDIPDILKPMASVEFDDPLTKATGDVLNWTLWLIRNFPALSNIIMRLPSSLVSIVTSSFEGANQMFQVTTSTHNLYSASLPTHATKQIISKLVEHEKTHIGPKNKDCVVQRLLNAHRDSESKISIPTPDATVRSEAIGFTLAGTADPPNILALGTFMAARDPEMQEGLYKELRAVWPDLRSPVPSYNLLHQLPLLRGVVKESIRFTHGVATGPARLVGAGGARIGGYNVPAKASLAVVAAPSYFVHMDETVFSEPEKFEPRRWADNDYSKSLVAFSRGRRMCPAEQFHVEPYETTSVPRSEERG.

Cys288 contacts heme.

The protein belongs to the cytochrome P450 family. Heme serves as cofactor.

Its pathway is secondary metabolite biosynthesis. In terms of biological role, cytochrome P450 monooxygenase; part of the gene cluster that mediates the biosynthesis of pyrrolopyrazines, secondary metabolites showing insecticidal activity. The role of ppzG within the pathway has still to be determined. The single multifunctional NRPS ppzA is sufficient to produce peramine via condensation of 1-pyrroline-5-carboxylate and arginine, N-methylation of the alpha-amino group of arginine and reduction of the thioester and the cyclization to form an iminium ion resulting in release from the peptide synthetase. Deprotonation of this intermediate and oxidation of the pyrroline ring would give rise to peramine. In Epichloe species that produce only peramine, the peramine synthetase gene is not localized in a gene cluster, in contrast to Metarhizium species that contain additional pyrrolopyrazine biosynthesis genes. The 2-oxoglutarate-Fe(II) type oxidoreductase ppzC hydroxylates peramine to yield the newly identified compound 8-hydroxyperamine whereas ppzD converts L-proline into trans-4-hydroxy-L-proline, a precursor of peramine biosynthesis. This is Cytochrome P450 monooxygenase ppzG (ppzG) from Metarhizium majus (strain ARSEF 297).